Consider the following 244-residue polypeptide: DNA repair protein RecO (244 aa).

The protein belongs to the RecO family.

Functionally, involved in DNA repair and RecF pathway recombination. The sequence is that of DNA repair protein RecO from Koribacter versatilis (strain Ellin345).